Here is a 376-residue protein sequence, read N- to C-terminus: Alcohol dehydrogenase 6 (376 aa).

Zn(2+) contacts are provided by C47, H69, C99, C102, C105, C113, and C175. Residues 200 to 205 (GLGGVG), D224, R229, 293 to 295 (VGA), and R371 each bind NAD(+).

The protein belongs to the zinc-containing alcohol dehydrogenase family. Class-V subfamily. In terms of assembly, dimer. Zn(2+) serves as cofactor.

The protein localises to the cytoplasm. The enzyme catalyses a primary alcohol + NAD(+) = an aldehyde + NADH + H(+). It catalyses the reaction a secondary alcohol + NAD(+) = a ketone + NADH + H(+). Alcohol dehydrogenase. Catalyzes the NAD-dependent oxidation of primary alcohols to the corresponding aldehydes. Oxidizes secondary alcohols to the corresponding ketones. The chain is Alcohol dehydrogenase 6 (Adh6) from Rattus norvegicus (Rat).